Reading from the N-terminus, the 535-residue chain is uncharacterized protein (535 aa).

Residues M1–K34 are disordered. Positions H15–K34 are enriched in basic and acidic residues.

This is an uncharacterized protein from Escherichia coli (strain K12).